A 233-amino-acid chain; its full sequence is Hydroxyacylglutathione hydrolase (233 aa).

Zn(2+) contacts are provided by His52, His54, Asp56, His57, His108, Asp125, and His163.

This sequence belongs to the metallo-beta-lactamase superfamily. Glyoxalase II family. In terms of assembly, monomer. It depends on Zn(2+) as a cofactor.

It catalyses the reaction an S-(2-hydroxyacyl)glutathione + H2O = a 2-hydroxy carboxylate + glutathione + H(+). It participates in secondary metabolite metabolism; methylglyoxal degradation; (R)-lactate from methylglyoxal: step 2/2. Functionally, thiolesterase that catalyzes the hydrolysis of S-D-lactoyl-glutathione to form glutathione and D-lactic acid. The protein is Hydroxyacylglutathione hydrolase of Actinobacillus succinogenes (strain ATCC 55618 / DSM 22257 / CCUG 43843 / 130Z).